Reading from the N-terminus, the 476-residue chain is Raffinose invertase (476 aa).

Substrate-binding positions include 35-38 (WMND), Gln54, 97-98 (FS), 159-160 (RD), Glu214, and Trp297. Asp38 is an active-site residue.

Belongs to the glycosyl hydrolase 32 family. In terms of assembly, homodimer.

It catalyses the reaction Hydrolysis of terminal non-reducing beta-D-fructofuranoside residues in beta-D-fructofuranosides.. May prevent the potential hasard of excessive sucrose accumulation. In Escherichia coli, this protein is Raffinose invertase (rafD).